A 250-amino-acid chain; its full sequence is MSGKDRINVFPSRMALTLMKARLKGAQKGHSLLKRKADALTLRFRQILGKIIETKTLMGEVMKEATFSLAEAKFVAGDFSEMVLQNVDKAKIRLHTKKDNVAGVTLPVFETYSDGSDTYELTGLSRGGQLVSKCKEVFGKAVRLLVELASLQTAFVTLDEVIKVTNRRVNAIEHVIIPKIQRTLSYISIELDEREREEFYRLKKIQEKKKKQKAIKEKETEIRIARQKNKKSAAPVKTIFETGNDDDLLF.

The protein belongs to the V-ATPase D subunit family. V-ATPase is a heteromultimeric enzyme made up of two complexes: the ATP-hydrolytic V1 complex and the proton translocation V0 complex. The V1 complex consists of three catalytic AB heterodimers that form a heterohexamer, three peripheral stalks each consisting of EG heterodimers, one central rotor including subunits D and F, and the regulatory subunits C and H. The proton translocation complex V0 consists of the proton transport subunit a, a ring of proteolipid subunits c9c'', rotary subunit d, subunits e and f, and two accessory subunits ATP6AP1/Ac45 and ATP6AP2/PRR.

Its function is as follows. Subunit of the V1 complex of vacuolar(H+)-ATPase (V-ATPase), a multisubunit enzyme composed of a peripheral complex (V1) that hydrolyzes ATP and a membrane integral complex (V0) that translocates protons. V-ATPase is responsible for acidifying and maintaining the pH of intracellular compartments and in some cell types, is targeted to the plasma membrane, where it is responsible for acidifying the extracellular environment. The chain is V-type proton ATPase subunit D (VATPD) from Suberites domuncula (Sponge).